Consider the following 280-residue polypeptide: MDTKIIVNHALRALLYEVTVNPKPGLVDPLSAGPHPDMNAFMFIDSALSLAPYFNACAAAGVAYTAVDLTGLFKQIRGIGVQAEQTMFAATKGVNTHKGAVFSLGVLVTAAAYQLQHPDVDLATIVRTMLAGLTANDFNDLNTKDPTTLTAGERQYLTYGIKGIRGEAEAGYPTVMQVALPALRRSRGTINQRLLDTLMAIVQATVDTNLVKRAHDPHVIDWVHDQAHRYFDLGGSRSEAGMAFLRELNQIFVDHNYSLGGSADLLILTIFIGLQTDILA.

Belongs to the CitG/MdcB family.

The catalysed reaction is 3'-dephospho-CoA + ATP = 2'-(5''-triphospho-alpha-D-ribosyl)-3'-dephospho-CoA + adenine. This Lactiplantibacillus plantarum (strain ATCC BAA-793 / NCIMB 8826 / WCFS1) (Lactobacillus plantarum) protein is Probable 2-(5''-triphosphoribosyl)-3'-dephosphocoenzyme-A synthase.